Consider the following 266-residue polypeptide: Glucosamine-6-phosphate deaminase (266 aa).

Residue Asp-72 is the Proton acceptor; for enolization step of the active site. Asp-141 acts as the For ring-opening step in catalysis. His-143 acts as the Proton acceptor; for ring-opening step in catalysis. The For ring-opening step role is filled by Glu-148.

It belongs to the glucosamine/galactosamine-6-phosphate isomerase family. NagB subfamily. In terms of assembly, homohexamer.

It carries out the reaction alpha-D-glucosamine 6-phosphate + H2O = beta-D-fructose 6-phosphate + NH4(+). The protein operates within amino-sugar metabolism; N-acetylneuraminate degradation; D-fructose 6-phosphate from N-acetylneuraminate: step 5/5. Allosterically activated by N-acetylglucosamine 6-phosphate (GlcNAc6P). Functionally, catalyzes the reversible isomerization-deamination of glucosamine 6-phosphate (GlcN6P) to form fructose 6-phosphate (Fru6P) and ammonium ion. The chain is Glucosamine-6-phosphate deaminase from Yersinia pestis bv. Antiqua (strain Antiqua).